Reading from the N-terminus, the 91-residue chain is MEAALEQHLEDTMKNPSIVGVLCTDSQGLNLGCCGSLSDKHAGVISILPQYAAKLTTDPTDVPVVCLESDNGTVMIQKHDHLTVAVHKVTS.

The protein belongs to the LAMTOR5 family. As to quaternary structure, part of the Ragulator complex composed of lamtor1, lamtor2, lamtor3, lamtor4 and lamtor5. The Ragulator complex interacts with slc38a9; the probable amino acid sensor. Component of the lysosomal folliculin complex (LFC).

The protein resides in the cytoplasm. It localises to the lysosome. As part of the Ragulator complex it is involved in amino acid sensing and activation of mTORC1, a signaling complex promoting cell growth in response to growth factors, energy levels, and amino acids. Activated by amino acids through a mechanism involving the lysosomal V-ATPase, the Ragulator plays a dual role for the small GTPases Rag (RagA/RRAGA, RagB/RRAGB, RagC/RRAGC and/or RagD/RRAGD): it (1) acts as a guanine nucleotide exchange factor (GEF), activating the small GTPases Rag and (2) mediates recruitment of Rag GTPases to the lysosome membrane. Activated Ragulator and Rag GTPases function as a scaffold recruiting mTORC1 to lysosomes where it is in turn activated. The polypeptide is Ragulator complex protein LAMTOR5 (lamtor5) (Xenopus laevis (African clawed frog)).